The sequence spans 284 residues: Nucleotide-binding protein Sbal_3671 (284 aa).

ATP is bound at residue 8–15 (GRSGSGKS). Position 56–59 (56–59 (DVRN)) interacts with GTP.

Belongs to the RapZ-like family.

In terms of biological role, displays ATPase and GTPase activities. The chain is Nucleotide-binding protein Sbal_3671 from Shewanella baltica (strain OS155 / ATCC BAA-1091).